The following is a 251-amino-acid chain: MKIVLLYYFVNMFISGIFQIANVEVGQHFYWSILGFQIHGQVLINSWIVILIIGFLSIYTTKNLTLVPANKQIFIELVTEFITDISKTQIGEKEYSKWVPYIGTMFLFIFVSNWSGALIPWKIIELPNGELGAPTNDINTTAGLAILTSLAYFYAGLNKKGLTYFKKYVQPTPILLPINILEDFTKPLSLSFRLFGNILADELVVAVLVSLVPLIVPVPLIFLGLFTSGIQALIFATLSGSYIGEAMEGHH.

The next 6 helical transmembrane spans lie at 3–23 (IVLL…IANV), 38–58 (IHGQ…FLSI), 99–119 (VPYI…GALI), 138–158 (INTT…AGLN), 203–223 (LVVA…LIFL), and 224–244 (GLFT…SYIG).

The protein belongs to the ATPase A chain family. F-type ATPases have 2 components, CF(1) - the catalytic core - and CF(0) - the membrane proton channel. CF(1) has five subunits: alpha(3), beta(3), gamma(1), delta(1), epsilon(1). CF(0) has four main subunits: a, b, b' and c.

The protein resides in the plastid. Its subcellular location is the chloroplast thylakoid membrane. In terms of biological role, key component of the proton channel; it plays a direct role in the translocation of protons across the membrane. The sequence is that of ATP synthase subunit a, chloroplastic from Euglena gracilis.